The following is a 152-amino-acid chain: Pertussis toxin subunit 4 (152 aa).

A signal peptide spans 1 to 42 (MLRRFPTRTTAPGQGGARRSRVRALAWLLASGAMTHLSPALA). Disulfide bonds link Cys73-Cys93 and Cys145-Cys151.

Pertussis toxin contains five different chains, S1-S5. They are organized into 2 functional subunits: A, composed of S1 (which is toxic) and B, containing S2, S3, S5, and two copies of S4 (B binds to the membrane receptors). Dimers of S2-S4 and S3-S4 are held together by S5.

Its subcellular location is the secreted. The protein localises to the host cell membrane. Functionally, PTX oligomer B binds to receptors on the eukaryotic cell surface and facilitates the translocation of the toxic subunit across the cell membrane. The chain is Pertussis toxin subunit 4 (ptxD) from Bordetella parapertussis (strain 12822 / ATCC BAA-587 / NCTC 13253).